A 353-amino-acid chain; its full sequence is Colistin resistance protein EmrA (353 aa).

Residues 21-41 form a helical membrane-spanning segment; sequence WGVFSVLLLFLVAGILYYFFV. Residues 132–204 are a coiled coil; sequence VVAAQADLAR…QASRAQLLAD (73 aa).

This sequence belongs to the membrane fusion protein (MFP) (TC 8.A.1) family.

It localises to the cell inner membrane. In terms of biological role, probably part of an efflux pump system that contributes to adaptation to osmotic stress and resistance to colistin. The protein is Colistin resistance protein EmrA of Acinetobacter baumannii (strain ATCC 17978 / DSM 105126 / CIP 53.77 / LMG 1025 / NCDC KC755 / 5377).